The sequence spans 248 residues: Triosephosphate isomerase (248 aa).

9 to 11 (NWK) provides a ligand contact to substrate. His94 serves as the catalytic Electrophile. The Proton acceptor role is filled by Glu166. Substrate-binding positions include Gly172, Ser212, and 233-234 (GG).

The protein belongs to the triosephosphate isomerase family. In terms of assembly, homodimer.

It localises to the cytoplasm. It catalyses the reaction D-glyceraldehyde 3-phosphate = dihydroxyacetone phosphate. Its pathway is carbohydrate biosynthesis; gluconeogenesis. It participates in carbohydrate degradation; glycolysis; D-glyceraldehyde 3-phosphate from glycerone phosphate: step 1/1. Its function is as follows. Involved in the gluconeogenesis. Catalyzes stereospecifically the conversion of dihydroxyacetone phosphate (DHAP) to D-glyceraldehyde-3-phosphate (G3P). The chain is Triosephosphate isomerase from Clostridium botulinum (strain ATCC 19397 / Type A).